Here is a 64-residue protein sequence, read N- to C-terminus: Orcokinin peptides (64 aa).

2 consecutive propeptides follow at residues 1-6 and 23-24; these read MNIRPG and NI.

Belongs to the orcokinin family. In terms of tissue distribution, orcokinin-3 is expressed throughout the central nervous system (at protein level).

The protein localises to the secreted. In terms of biological role, myotropic peptides. The sequence is that of Orcokinin peptides from Camponotus floridanus (Florida carpenter ant).